Here is a 273-residue protein sequence, read N- to C-terminus: Ribosomal RNA small subunit methyltransferase I (273 aa).

This sequence belongs to the methyltransferase superfamily. RsmI family.

Its subcellular location is the cytoplasm. It carries out the reaction cytidine(1402) in 16S rRNA + S-adenosyl-L-methionine = 2'-O-methylcytidine(1402) in 16S rRNA + S-adenosyl-L-homocysteine + H(+). Functionally, catalyzes the 2'-O-methylation of the ribose of cytidine 1402 (C1402) in 16S rRNA. The chain is Ribosomal RNA small subunit methyltransferase I from Xylella fastidiosa (strain 9a5c).